The sequence spans 394 residues: Deoxyguanosinetriphosphate triphosphohydrolase-like protein (394 aa).

Residues M1 to F36 are disordered. A compositionally biased stretch (basic and acidic residues) spans F25–F36. Residues R70–N210 enclose the HD domain.

The protein belongs to the dGTPase family. Type 2 subfamily.

This is Deoxyguanosinetriphosphate triphosphohydrolase-like protein from Caulobacter vibrioides (strain ATCC 19089 / CIP 103742 / CB 15) (Caulobacter crescentus).